A 261-amino-acid chain; its full sequence is Ribonuclease HII (261 aa).

Residues 71 to 260 (HYIAGVDEVG…LHKYRHNTLL (190 aa)) form the RNase H type-2 domain. Aspartate 77, glutamate 78, and aspartate 169 together coordinate a divalent metal cation.

The protein belongs to the RNase HII family. Mn(2+) serves as cofactor. It depends on Mg(2+) as a cofactor.

The protein localises to the cytoplasm. The enzyme catalyses Endonucleolytic cleavage to 5'-phosphomonoester.. In terms of biological role, endonuclease that specifically degrades the RNA of RNA-DNA hybrids. The sequence is that of Ribonuclease HII from Oceanobacillus iheyensis (strain DSM 14371 / CIP 107618 / JCM 11309 / KCTC 3954 / HTE831).